The primary structure comprises 588 residues: UvrABC system protein C (588 aa).

In terms of domain architecture, GIY-YIG spans 12–89; that stretch reads SKPGCYLYLN…IKKYRPKYNV (78 aa). Residues 194–229 enclose the UVR domain; the sequence is NEVKTLLTNQMHKAAENLQFEEAQRIKEQIISLDFT.

The protein belongs to the UvrC family. As to quaternary structure, interacts with UvrB in an incision complex.

It is found in the cytoplasm. Functionally, the UvrABC repair system catalyzes the recognition and processing of DNA lesions. UvrC both incises the 5' and 3' sides of the lesion. The N-terminal half is responsible for the 3' incision and the C-terminal half is responsible for the 5' incision. This Mesoplasma florum (strain ATCC 33453 / NBRC 100688 / NCTC 11704 / L1) (Acholeplasma florum) protein is UvrABC system protein C.